A 425-amino-acid chain; its full sequence is Probable isoprenylcysteine alpha-carbonyl methylesterase ICMEL1 (425 aa).

The span at 1-10 (MQVELADRAA) shows a compositional bias: basic and acidic residues. A disordered region spans residues 1-42 (MQVELADRAAARPSETGEAPPSSPAAAAAASAAAEDAPLLPG). The span at 24–34 (PAAAAAASAAA) shows a compositional bias: low complexity. 2 helical membrane passes run 99 to 119 (FLAL…VVYY) and 154 to 174 (VVAF…GALL). Substrate-binding positions include 160–162 (GGA) and 231–233 (QSA). Catalysis depends on residues Ser232, Asp334, and His366.

It belongs to the AB hydrolase superfamily. Isoprenylcysteine methylesterase family.

It localises to the endoplasmic reticulum membrane. Its subcellular location is the golgi apparatus membrane. The enzyme catalyses [protein]-C-terminal S-[(2E,6E)-farnesyl]-L-cysteine methyl ester + H2O = [protein]-C-terminal S-[(2E,6E)-farnesyl]-L-cysteine + methanol + H(+). Catalyzes the demethylation of isoprenylcysteine methylesters. In Oryza sativa subsp. japonica (Rice), this protein is Probable isoprenylcysteine alpha-carbonyl methylesterase ICMEL1 (IMCEL1).